Reading from the N-terminus, the 179-residue chain is Large ribosomal subunit protein uL5 (179 aa).

Belongs to the universal ribosomal protein uL5 family. Part of the 50S ribosomal subunit; part of the 5S rRNA/L5/L18/L25 subcomplex. Contacts the 5S rRNA and the P site tRNA. Forms a bridge to the 30S subunit in the 70S ribosome.

In terms of biological role, this is one of the proteins that bind and probably mediate the attachment of the 5S RNA into the large ribosomal subunit, where it forms part of the central protuberance. In the 70S ribosome it contacts protein S13 of the 30S subunit (bridge B1b), connecting the 2 subunits; this bridge is implicated in subunit movement. Contacts the P site tRNA; the 5S rRNA and some of its associated proteins might help stabilize positioning of ribosome-bound tRNAs. The chain is Large ribosomal subunit protein uL5 from Agathobacter rectalis (strain ATCC 33656 / DSM 3377 / JCM 17463 / KCTC 5835 / VPI 0990) (Eubacterium rectale).